Consider the following 100-residue polypeptide: MWGFLVLKARWLVTPVRTLATEAGQKPSLRGLLDVGNIQHRAARARGLTRGVIRVSPQERSQQNQSAPKGPTPSTRPKPRTLGPQAHSLALQSVDLLFRP.

An N-terminal signal peptide occupies residues 1–18; sequence MWGFLVLKARWLVTPVRT. Residues 48–86 are disordered; it reads LTRGVIRVSPQERSQQNQSAPKGPTPSTRPKPRTLGPQA. The segment covering 58–69 has biased composition (polar residues); it reads QERSQQNQSAPK. An N-linked (GlcNAc...) asparagine glycan is attached at N64.

Its subcellular location is the secreted. This is an uncharacterized protein from Homo sapiens (Human).